The primary structure comprises 100 residues: Urease subunit gamma (100 aa).

This sequence belongs to the urease gamma subunit family. Heterotrimer of UreA (gamma), UreB (beta) and UreC (alpha) subunits. Three heterotrimers associate to form the active enzyme.

It localises to the cytoplasm. The enzyme catalyses urea + 2 H2O + H(+) = hydrogencarbonate + 2 NH4(+). It functions in the pathway nitrogen metabolism; urea degradation; CO(2) and NH(3) from urea (urease route): step 1/1. The protein is Urease subunit gamma of Prochlorococcus marinus (strain MIT 9312).